A 431-amino-acid polypeptide reads, in one-letter code: MMKFLTRMLSAFAVLFFAISTAQADDEVRIVIDEGVDGARPIAVVPFKTNGSVPADIAEIVTADLRNSGKFNPIPVSQMPQQPASASEVTPDAWAALGVDAIVVGQVTATGNGYNIAYQLVDTVGASGGAGAVLAQNSVTVGAKWIRYGAHTVSDEVFEKLTAIKGAFRTRIAYVVQKNGGSKPYEIRVADYDGFNQFIVNRSSQPIMSPAWSPDGKRLAYVSFENRKSQLVVQDLGSGARKVVASFQGHNGAPAFSPDGSRLAFASNKEGQLNIYVMGANGGQPTQLTSGSGNNTEPSWSPDGSSILFTSDRGGSPQVYRMSSSGGAASPVGGRGSAQISSDGKTLVMINGNNNVVKQDVTSGASEVLSTSFLGESPSLSPNGIMIIYSSTQGLGKVLQLVSADGRFKARLPGTDGQVKFPAWSPYLDKN.

The N-terminal stretch at 1 to 24 (MMKFLTRMLSAFAVLFFAISTAQA) is a signal peptide. Residues 318 to 340 (QVYRMSSSGGAASPVGGRGSAQI) are disordered. Residues 323 to 332 (SSSGGAASPV) are compositionally biased toward low complexity.

Belongs to the TolB family. In terms of assembly, the Tol-Pal system is composed of five core proteins: the inner membrane proteins TolA, TolQ and TolR, the periplasmic protein TolB and the outer membrane protein Pal. They form a network linking the inner and outer membranes and the peptidoglycan layer.

The protein localises to the periplasm. Functionally, part of the Tol-Pal system, which plays a role in outer membrane invagination during cell division and is important for maintaining outer membrane integrity. This is Tol-Pal system protein TolB from Mannheimia succiniciproducens (strain KCTC 0769BP / MBEL55E).